Here is a 539-residue protein sequence, read N- to C-terminus: G protein-coupled receptor associated sorting protein 3 (539 aa).

Residues 1–10 (MTGSKNKARA) show a composition bias toward basic residues. Disordered stretches follow at residues 1–111 (MTGS…DSWF) and 132–170 (NSVA…EEEE). 2 stretches are compositionally biased toward basic and acidic residues: residues 66–80 (VVAE…ESKA) and 88–106 (FNHK…DKPS). The span at 132–146 (NSVAKCENKPSTSIQ) shows a compositional bias: polar residues.

This sequence belongs to the GPRASP family. In terms of assembly, homodimer.

Its subcellular location is the cytoplasm. The protein localises to the nucleus. Survival and differentiation promoting protein that plays a role in the regulation of neurosynaptogenesis. Induces phosphatase PP2A activity which results in APP dephosphorylation and inhibits BACE1-mediated processing of APP. In Rattus norvegicus (Rat), this protein is G protein-coupled receptor associated sorting protein 3 (Gprasp3).